Here is a 650-residue protein sequence, read N- to C-terminus: Solute carrier family 23 member 2 (650 aa).

Residues methionine 1 to glutamate 20 show a composition bias toward polar residues. The disordered stretch occupies residues methionine 1–glycine 21. Topologically, residues threonine 9 to tyrosine 110 are cytoplasmic. Serine 70 carries the phosphoserine modification. Position 75 is a phosphothreonine (threonine 75). Phosphoserine is present on serine 78. Threonine 79 bears the Phosphothreonine mark. A Phosphoserine modification is found at serine 81. A helical transmembrane segment spans residues leucine 111–glycine 131. Residues tyrosine 132–glutamine 139 lie on the Extracellular side of the membrane. The chain crosses the membrane as a helical span at residues leucine 140–cysteine 160. A topological domain (cytoplasmic) is located at residue arginine 161. Residues leucine 162 to leucine 182 traverse the membrane as a helical segment. Topologically, residues aspartate 183–alanine 218 are extracellular. Asparagine 188 and asparagine 196 each carry an N-linked (GlcNAc...) asparagine glycan. Residues isoleucine 219 to leucine 239 form a helical membrane-spanning segment. Over lysine 240–alanine 266 the chain is Cytoplasmic. A helical transmembrane segment spans residues glycine 267–serine 284. The Extracellular segment spans residues glutamine 285–arginine 288. The helical intramembrane region spans asparagine 289 to glycine 302. Residues tryptophan 303 to glutamine 309 are Extracellular-facing. A helical transmembrane segment spans residues leucine 310–phenylalanine 330. Topologically, residues threonine 331 to glycine 371 are cytoplasmic. The helical transmembrane segment at leucine 372–isoleucine 392 threads the bilayer. Residues glutamate 393–arginine 417 lie on the Extracellular side of the membrane. The chain crosses the membrane as a helical span at residues glycine 418–serine 438. Residues threonine 439 to cysteine 461 are Cytoplasmic-facing. A helical transmembrane segment spans residues glycine 462–leucine 482. Topologically, residues proline 483–proline 485 are extracellular. Residues valine 486–leucine 506 traverse the membrane as a helical segment. Residues glutamine 507–asparagine 516 lie on the Cytoplasmic side of the membrane. The chain crosses the membrane as a helical span at residues leucine 517–asparagine 537. Topologically, residues proline 538–aspartate 547 are extracellular. Residues glutamine 548–leucine 568 traverse the membrane as a helical segment. The Cytoplasmic portion of the chain corresponds to aspartate 569 to glycine 650. The residue at position 649 (threonine 649) is a Phosphothreonine.

It belongs to the nucleobase:cation symporter-2 (NCS2) (TC 2.A.40) family. As to quaternary structure, interacts with CLSTN3. Phosphorylated. In terms of tissue distribution, ubiquitous.

Its subcellular location is the cell membrane. It carries out the reaction L-ascorbate(out) + 2 Na(+)(out) = L-ascorbate(in) + 2 Na(+)(in). In terms of biological role, sodium/ascorbate cotransporter. Mediates electrogenic uptake of vitamin C, with a stoichiometry of 2 Na(+) for each ascorbate. The polypeptide is Solute carrier family 23 member 2 (SLC23A2) (Homo sapiens (Human)).